Reading from the N-terminus, the 201-residue chain is Dermatopontin (201 aa).

Positions 1–18 (MDLTLLWVLLPLVTTAWG) are cleaved as a signal peptide. At Gln-19 the chain carries Pyrrolidone carboxylic acid. Residues 19 to 186 (QYGGYGYPYQ…AVERDRQWKF (168 aa)) are 2 X 53-55 AA tandem repeats. Tyr-23 carries the post-translational modification Sulfotyrosine. 4 consecutive repeat copies span residues 26–79 (PYQQ…ACMP), 70–75 (DRQWNY), 80–135 (TPQS…CCRY), and 125–130 (DREWQF). 5 disulfides stabilise this stretch: Cys-50-Cys-77, Cys-90-Cys-132, Cys-106-Cys-133, Cys-139-Cys-196, and Cys-143-Cys-189. A 3 X 6 AA tandem repeats of D-R-[EQ]-W-[NQK]-[FY] region spans residues 70-186 (DRQWNYACMP…AVERDRQWKF (117 aa)). Sulfotyrosine occurs at positions 162, 164, and 167. The 2-3 repeat unit spans residues 181–186 (DRQWKF). The residue at position 194 (Tyr-194) is a Sulfotyrosine.

The protein belongs to the dermatopontin family. Interacts with TGFB1, DCN and collagen. Post-translationally, sulfated on tyrosine residue(s).

The protein resides in the secreted. Its subcellular location is the extracellular space. It is found in the extracellular matrix. Functionally, seems to mediate adhesion by cell surface integrin binding. May serve as a communication link between the dermal fibroblast cell surface and its extracellular matrix environment. Enhances TGFB1 activity. Inhibits cell proliferation. Accelerates collagen fibril formation, and stabilizes collagen fibrils against low-temperature dissociation. In Mus musculus (Mouse), this protein is Dermatopontin (Dpt).